The primary structure comprises 884 residues: Blastomere cadherin (884 aa).

The N-terminal stretch at methionine 1–serine 26 is a signal peptide. Positions isoleucine 27–arginine 157 are excised as a propeptide. 5 consecutive Cadherin domains span residues aspartate 158 to phenylalanine 265, threonine 266 to phenylalanine 378, aspartate 379 to phenylalanine 489, valine 490 to proline 595, and valine 596 to leucine 706. The Extracellular segment spans residues aspartate 158 to leucine 706. 3 N-linked (GlcNAc...) asparagine glycosylation sites follow: asparagine 427, asparagine 560, and asparagine 683. The helical transmembrane segment at proline 707–leucine 730 threads the bilayer. Residues lysine 731–glutamate 884 are Cytoplasmic-facing.

As to expression, expressed in pituitary gland, lung and kidney.

It is found in the cell membrane. Functionally, cadherins are calcium-dependent cell adhesion proteins. They preferentially interact with themselves in a homophilic manner in connecting cells; cadherins may thus contribute to the sorting of heterogeneous cell types. The polypeptide is Blastomere cadherin (Xenopus laevis (African clawed frog)).